We begin with the raw amino-acid sequence, 451 residues long: Probable tyrosyl-DNA phosphodiesterase (451 aa).

The disordered stretch occupies residues 1–34 (MKRTIQETPGPSSTTVPPPKKLNSQRNGSNLEPG). The span at 22 to 32 (LNSQRNGSNLE) shows a compositional bias: polar residues. H131 serves as the catalytic Nucleophile. Position 133 (K133) interacts with substrate. The interaction with DNA stretch occupies residues 266–269 (SIGS). Residue H356 is the Proton donor/acceptor of the active site. K358 serves as a coordination point for substrate.

This sequence belongs to the tyrosyl-DNA phosphodiesterase family.

Its subcellular location is the nucleus. In terms of biological role, DNA repair enzyme that can remove a variety of covalent adducts from DNA through hydrolysis of a 3'-phosphodiester bond, giving rise to DNA with a free 3' phosphate. Catalyzes the hydrolysis of dead-end complexes between DNA and the topoisomerase I active site tyrosine residue. Hydrolyzes 3'-phosphoglycolates on protruding 3' ends on DNA double-strand breaks due to DNA damage by radiation and free radicals. Acts on blunt-ended double-strand DNA breaks and on single-stranded DNA. May have low 3'exonuclease activity and may be able to remove a single nucleoside from the 3'end of DNA and RNA molecules with 3'hydroxyl groups. Has no exonuclease activity towards DNA or RNA with a 3'phosphate. This is Probable tyrosyl-DNA phosphodiesterase from Caenorhabditis elegans.